Reading from the N-terminus, the 3343-residue chain is Breast cancer type 2 susceptibility protein homolog (3343 aa).

The interval 1-40 (MTVEYKRRPTFWEIFKARCSTADLGPISLNWFEELFSEAP) is interaction with PALB2. Residues 40–60 (PPYNTEHPEESEYKPQGHEPQ) are disordered. Residues 45–56 (EHPEESEYKPQG) are compositionally biased toward basic and acidic residues. Ser-70 bears the Phosphoserine mark. The tract at residues 348 to 381 (IEPRDSEPLDPSVTNQKPLYSQSGDISSEAGQCS) is disordered. Positions 359–381 (SVTNQKPLYSQSGDISSEAGQCS) are enriched in polar residues. Phosphoserine is present on residues Ser-475 and Ser-736. An interaction with NPM1 region spans residues 622-982 (PDSSIKRSNL…DKWSEFLDPL (361 aa)). BRCA2 repeat units follow at residues 984–1018 (NHKLGGSFRTASNKEIKLSEDNVKKSKMFFKDIEE), 1197–1231 (KEMEFGGFCSALGTKLSVSNEALRKAMKLFSDIEN), 1405–1439 (MKEFNISFQTASGKNIRVSKESLNKSVNILDQETE), 1503–1537 (KEPTLLSFHTASGKKVKIMQESLDKVKNLFDETQY), 1645–1669 (CYTGDSRKTCVGESSLSKGKKWLRE), 1828–1845 (FITTHSQETVRMKEIFTD), 1939–1973 (PSRTYGFFSTASGKAVQVSDASLEKARQVFSEIDG), and 2019–2053 (SSFVFSGFSTAGGKLVTVSESALHKVKGMLEEFDL). The interval 985–2050 (HKLGGSFRTA…LHKVKGMLEE (1066 aa)) is interaction with RAD51. 3 disordered regions span residues 2059–2138 (TLQH…VLGT), 2297–2356 (PFCS…SDKS), and 2377–2407 (DSKNVNLEGKNQKSADGVSEDGNDSDFPQFN). Ser-2063 carries the phosphoserine modification. 2 stretches are compositionally biased toward polar residues: residues 2083–2094 (PEYSVSSKLQKT) and 2101–2125 (SPSNYKESGSSGNTQSLEVSPQLSQ). The segment at 2233 to 2300 (RKRGGMAGVA…EPVTCGPFCS (68 aa)) is interaction with HSF2BP. 2 stretches are compositionally biased toward polar residues: residues 2307 to 2320 (TQSPHVTSPAQGLQ) and 2332 to 2342 (GKSSSNPTVSA). An interaction with FANCD2 region spans residues 2313–2475 (TSPAQGLQSK…SPKQLYMYGV (163 aa)). The segment covering 2344 to 2356 (RSERTRHSVSDKS) has biased composition (basic and acidic residues). The tract at residues 2411-2762 (MSSLQNARDL…QRVYPLQWVE (352 aa)) is interaction with SEM1. Positions 2612-2628 (AAKTLVLCVSDIISLST) match the Nuclear export signal; masked by interaction with SEM1 motif. A disordered region spans residues 3114-3163 (DSPKWSTPNKDPTREPYPASTCSASDLASGGQLPRSSPTDQQSYRSPLSC). Positions 3147–3163 (PRSSPTDQQSYRSPLSC) are enriched in polar residues. A Phosphoserine; by CDK1 and CDK2 modification is found at Ser-3222. 2 disordered regions span residues 3231-3255 (PPRSCGTKYPTPLKKEGPSSPWSRA) and 3289-3343 (VGGS…PDYS). A Phosphoserine modification is found at Ser-3250. Polar residues predominate over residues 3295–3310 (VFPSDSTRTEGPSAST). Positions 3318–3334 (SKRESLRDCRDDSDGKL) are enriched in basic and acidic residues.

In terms of assembly, monomer and dimer. Interacts with RAD51; regulates RAD51 recruitment and function at sites of DNA repair. Interacts with SEM1, WDR16, USP11, DMC1, ROCK2 and NPM1. Interacts with both nonubiquitinated and monoubiquitinated FANCD2; this complex also includes XRCC3 and phosphorylated FANCG. Part of a BRCA complex containing BRCA1, BRCA2 and PALB2. Component of the homologous recombination repair (HR) complex composed of ERCC5/XPG, BRCA2, PALB2, DSS1 and RAD51. Within the complex, interacts with ERCC5/XPG and PALB2. Interacts directly with PALB2 which may serve as a scaffold for a HR complex containing PALB2, BRCA2, RAD51C, RAD51 and XRCC3. Interacts with BRCA1 only in the presence of PALB2 which serves as the bridging protein. Interacts with POLH; the interaction is direct. Interacts with the TREX-2 complex subunits PCID2 and SEM1. Interacts with HSF2BP and BRME1; the interaction with HSF2BP is direct and allows the formation of a ternary complex. The complex BRME1:HSF2BP:BRCA2 interacts with SPATA22, MEIOB and RAD51. In terms of processing, phosphorylated by ATM upon irradiation-induced DNA damage. Phosphorylation by CHEK1 and CHEK2 regulates interaction with RAD51. Phosphorylation at Ser-3222 by CDK1 and CDK2 is low in S phase when recombination is active, but increases as cells progress towards mitosis; this phosphorylation prevents homologous recombination-dependent repair during S phase and G2 by inhibiting RAD51 binding. Ubiquitinated in the absence of DNA damage; this does not lead to proteasomal degradation. In contrast, ubiquitination in response to DNA damage leads to proteasomal degradation. As to expression, highest expression in testis. Also expressed in spleen, skeletal muscle, thymus, mammary gland, heart, ovary, prostate, liver, lung, kidney and brain.

It localises to the nucleus. The protein resides in the cytoplasm. The protein localises to the cytoskeleton. It is found in the microtubule organizing center. Its subcellular location is the centrosome. In terms of biological role, involved in double-strand break repair and/or homologous recombination. Binds RAD51 and potentiates recombinational DNA repair by promoting assembly of RAD51 onto single-stranded DNA (ssDNA). Acts by targeting RAD51 to ssDNA over double-stranded DNA, enabling RAD51 to displace replication protein-A (RPA) from ssDNA and stabilizing RAD51-ssDNA filaments by blocking ATP hydrolysis. Part of a PALB2-scaffolded HR complex containing RAD51C and which is thought to play a role in DNA repair by HR. May participate in S phase checkpoint activation. Binds selectively to ssDNA, and to ssDNA in tailed duplexes and replication fork structures. May play a role in the extension step after strand invasion at replication-dependent DNA double-strand breaks; together with PALB2 is involved in both POLH localization at collapsed replication forks and DNA polymerization activity. In concert with NPM1, regulates centrosome duplication. Interacts with the TREX-2 complex (transcription and export complex 2) subunits PCID2 and SEM1, and is required to prevent R-loop-associated DNA damage and thus transcription-associated genomic instability, independently of its known role in homologous recombination. The polypeptide is Breast cancer type 2 susceptibility protein homolog (Rattus norvegicus (Rat)).